The sequence spans 870 residues: Radial spoke head 10 homolog B2 (870 aa).

Over residues methionine 1 to alanine 16 the composition is skewed to basic and acidic residues. The segment at methionine 1–glycine 44 is disordered. Residues arginine 17 to glutamate 39 are compositionally biased toward polar residues. 10 MORN repeats span residues tyrosine 86–threonine 108, tyrosine 109–lysine 131, tyrosine 132–methionine 154, tyrosine 155–valine 177, tyrosine 179–threonine 201, tyrosine 204–isoleucine 226, tyrosine 227–glutamate 249, tyrosine 251–isoleucine 273, tyrosine 284–methionine 306, and tyrosine 307–valine 329. Positions asparagine 674–proline 704 are disordered. Over residues histidine 683–serine 692 the composition is skewed to basic and acidic residues. A compositionally biased stretch (low complexity) spans alanine 693–serine 703. The stretch at lysine 784–arginine 811 forms a coiled coil. The disordered stretch occupies residues valine 840 to lysine 870.

In terms of assembly, interacts with RSPH6A. Does not appear to be part of the axonemal radial spoke complexes 1 or 2.

It is found in the cytoplasm. Its subcellular location is the cytoskeleton. The protein resides in the cilium axoneme. It localises to the cell projection. The protein localises to the cilium. It is found in the flagellum. Functionally, may function as part of the axonemal radial spoke complex 3 (RS3). Radial spoke complexes are important for ciliary motility. In Homo sapiens (Human), this protein is Radial spoke head 10 homolog B2 (RSPH10B2).